The chain runs to 289 residues: 4-hydroxy-tetrahydrodipicolinate synthase (289 aa).

Residue threonine 42 participates in pyruvate binding. Tyrosine 129 serves as the catalytic Proton donor/acceptor. The active-site Schiff-base intermediate with substrate is the lysine 157. Residue isoleucine 198 coordinates pyruvate.

This sequence belongs to the DapA family. As to quaternary structure, homotetramer; dimer of dimers.

The protein localises to the cytoplasm. It catalyses the reaction L-aspartate 4-semialdehyde + pyruvate = (2S,4S)-4-hydroxy-2,3,4,5-tetrahydrodipicolinate + H2O + H(+). The protein operates within amino-acid biosynthesis; L-lysine biosynthesis via DAP pathway; (S)-tetrahydrodipicolinate from L-aspartate: step 3/4. In terms of biological role, catalyzes the condensation of (S)-aspartate-beta-semialdehyde [(S)-ASA] and pyruvate to 4-hydroxy-tetrahydrodipicolinate (HTPA). The sequence is that of 4-hydroxy-tetrahydrodipicolinate synthase from Chlamydia caviae (strain ATCC VR-813 / DSM 19441 / 03DC25 / GPIC) (Chlamydophila caviae).